Consider the following 106-residue polypeptide: Putative regulatory protein MalR (106 aa).

Residues 12 to 106 (CSIEYTLSFM…NLMHKWGQEN (95 aa)) enclose the HTH hxlR-type domain.

Potential regulator of the malBH genes. The protein is Putative regulatory protein MalR (malR) of Fusobacterium mortiferum.